We begin with the raw amino-acid sequence, 55 residues long: Large ribosomal subunit protein bL33 (55 aa).

This sequence belongs to the bacterial ribosomal protein bL33 family.

This Erythrobacter litoralis (strain HTCC2594) protein is Large ribosomal subunit protein bL33.